Reading from the N-terminus, the 703-residue chain is Polyribonucleotide nucleotidyltransferase (703 aa).

Mg(2+) is bound by residues D487 and D493. The KH domain maps to P554–I613. The S1 motif domain maps to G623–K691.

This sequence belongs to the polyribonucleotide nucleotidyltransferase family. In terms of assembly, component of the RNA degradosome, which is a multiprotein complex involved in RNA processing and mRNA degradation. Mg(2+) is required as a cofactor.

The protein localises to the cytoplasm. The catalysed reaction is RNA(n+1) + phosphate = RNA(n) + a ribonucleoside 5'-diphosphate. Functionally, involved in mRNA degradation. Catalyzes the phosphorolysis of single-stranded polyribonucleotides processively in the 3'- to 5'-direction. The chain is Polyribonucleotide nucleotidyltransferase from Hahella chejuensis (strain KCTC 2396).